We begin with the raw amino-acid sequence, 132 residues long: Small ribosomal subunit protein uS8 (132 aa).

Belongs to the universal ribosomal protein uS8 family. As to quaternary structure, part of the 30S ribosomal subunit. Contacts proteins S5 and S12.

In terms of biological role, one of the primary rRNA binding proteins, it binds directly to 16S rRNA central domain where it helps coordinate assembly of the platform of the 30S subunit. In Lactobacillus delbrueckii subsp. bulgaricus (strain ATCC BAA-365 / Lb-18), this protein is Small ribosomal subunit protein uS8.